We begin with the raw amino-acid sequence, 593 residues long: DNA topoisomerase I, mitochondrial (593 aa).

Residues 1-43 constitute a mitochondrion transit peptide; sequence MLLLWLRALCRRFQHVPRRVPSRQVSRGSKASRAGWGETSKSS. Interaction with DNA stretches follow at residues 254 to 255, 317 to 322, and 414 to 416; these read KY, RTGNEK, and TAK. The Topo IB-type catalytic domain occupies 261–593; it reads SSKPKGEMDW…FNQAGEDFEF (333 aa). Tyr551 acts as the O-(3'-phospho-DNA)-tyrosine intermediate in catalysis.

It belongs to the type IB topoisomerase family. Ca(2+) is required as a cofactor. Mg(2+) serves as cofactor.

Its subcellular location is the mitochondrion. It carries out the reaction ATP-independent breakage of single-stranded DNA, followed by passage and rejoining.. Functionally, releases the supercoiling and torsional tension of DNA introduced during duplication of mitochondrial DNA by transiently cleaving and rejoining one strand of the DNA duplex. Introduces a single-strand break via transesterification at a target site in duplex DNA. The scissile phosphodiester is attacked by the catalytic tyrosine of the enzyme, resulting in the formation of a DNA-(3'-phosphotyrosyl)-enzyme intermediate and the expulsion of a 5'-OH DNA strand. The free DNA strand then rotates around the intact phosphodiester bond on the opposing strand, thus removing DNA supercoils. Finally, in the religation step, the DNA 5'-OH attacks the covalent intermediate to expel the active-site tyrosine and restore the DNA phosphodiester backbone. The polypeptide is DNA topoisomerase I, mitochondrial (Top1mt) (Rattus norvegicus (Rat)).